A 141-amino-acid chain; its full sequence is Ribosome-binding factor A (141 aa).

This sequence belongs to the RbfA family. In terms of assembly, monomer. Binds 30S ribosomal subunits, but not 50S ribosomal subunits or 70S ribosomes.

It is found in the cytoplasm. In terms of biological role, one of several proteins that assist in the late maturation steps of the functional core of the 30S ribosomal subunit. Associates with free 30S ribosomal subunits (but not with 30S subunits that are part of 70S ribosomes or polysomes). Required for efficient processing of 16S rRNA. May interact with the 5'-terminal helix region of 16S rRNA. The chain is Ribosome-binding factor A from Beijerinckia indica subsp. indica (strain ATCC 9039 / DSM 1715 / NCIMB 8712).